The sequence spans 1008 residues: Ubiquitin carboxyl-terminal hydrolase 16 (1008 aa).

A helical transmembrane segment spans residues 7 to 27 (LGISSLVLVVSLVLPLIGLFV). Zn(2+) is bound by residues cysteine 74, cysteine 77, cysteine 85, cysteine 88, cysteine 94, cysteine 98, histidine 107, and cysteine 111. The MYND-type zinc-finger motif lies at 74–111 (CPVCYCLATTRCSRCKAVRYCSGKCQIIHWRQGHKDEC). Disordered stretches follow at residues 122–149 (DESDSDLRLGEENGQNTPEETLLVGPEP), 159–178 (LSNRARSPEDGNGDIADNKD), 187–233 (VSVA…LDAH), 275–309 (SVHKPEDDAGQNQSQSRSLHSLVTDRHPVSADPSL), and 326–379 (SDSC…YISD). Positions 193-203 (SGSSFSGFSSS) are enriched in low complexity. The segment covering 222–233 (ESERSESLLDAH) has biased composition (basic and acidic residues). Residues 284–295 (GQNQSQSRSLHS) show a composition bias toward polar residues. Residues 340–351 (SSLHFSFGSGSS) show a composition bias toward low complexity. The region spanning 542-847 (CGLINVGNSC…GAYMLFYARC (306 aa)) is the USP domain. The active-site Nucleophile is cysteine 551. The Proton acceptor role is filled by histidine 807. Disordered stretches follow at residues 859–905 (KTEA…GNIQ) and 952–1008 (FIFG…GGER). 2 stretches are compositionally biased toward low complexity: residues 878–888 (STISRSVSTSS) and 965–992 (SETPSPTSSSSSSSPPFTRRSPLSRSSP).

It belongs to the peptidase C19 family. In terms of assembly, interacts with SHM1 and SHM4. Interacts with HIPP27. As to expression, expressed in flowers, siliques, rosette leaves, cauline leaves, stems and at a lower level in roots. In roots, expressed in the sieve elements.

It is found in the membrane. The enzyme catalyses Thiol-dependent hydrolysis of ester, thioester, amide, peptide and isopeptide bonds formed by the C-terminal Gly of ubiquitin (a 76-residue protein attached to proteins as an intracellular targeting signal).. In terms of biological role, recognizes and hydrolyzes the peptide bond at the C-terminal Gly of ubiquitin. Involved in the processing of poly-ubiquitin precursors as well as that of ubiquitinated proteins. Involved in salt tolerance by modulating sodium transport activity and repressing cell death at least partially through modulating SHM1 stability and activity. Involved in cadmium tolerance by interacting with HIPP27 and probably modulating its stability. The chain is Ubiquitin carboxyl-terminal hydrolase 16 (UBP16) from Arabidopsis thaliana (Mouse-ear cress).